A 252-amino-acid polypeptide reads, in one-letter code: Ubiquinone biosynthesis protein COQ4 homolog 2, mitochondrial (252 aa).

4 residues coordinate Zn(2+): His-130, Asp-131, His-134, and Glu-146.

Belongs to the COQ4 family. Component of a multi-subunit COQ enzyme complex. Zn(2+) is required as a cofactor.

Its subcellular location is the mitochondrion inner membrane. It carries out the reaction a 4-hydroxy-3-methoxy-5-(all-trans-polyprenyl)benzoate + H(+) = a 2-methoxy-6-(all-trans-polyprenyl)phenol + CO2. The protein operates within cofactor biosynthesis; ubiquinone biosynthesis. Lyase that catalyzes the C1-decarboxylation of 4-hydroxy-3-methoxy-5-(all-trans-polyprenyl)benzoic acid into 2-methoxy-6-(all-trans-polyprenyl)phenol during ubiquinone biosynthesis. The sequence is that of Ubiquinone biosynthesis protein COQ4 homolog 2, mitochondrial from Trypanosoma cruzi (strain CL Brener).